Reading from the N-terminus, the 144-residue chain is Large ribosomal subunit protein uL11 (144 aa).

This sequence belongs to the universal ribosomal protein uL11 family. In terms of assembly, part of the ribosomal stalk of the 50S ribosomal subunit. Interacts with L10 and the large rRNA to form the base of the stalk. L10 forms an elongated spine to which L12 dimers bind in a sequential fashion forming a multimeric L10(L12)X complex. One or more lysine residues are methylated.

In terms of biological role, forms part of the ribosomal stalk which helps the ribosome interact with GTP-bound translation factors. The protein is Large ribosomal subunit protein uL11 of Parafrankia sp. (strain EAN1pec).